The following is a 512-amino-acid chain: 2,3-bisphosphoglycerate-independent phosphoglycerate mutase (512 aa).

Residues Asp12 and Ser62 each contribute to the Mn(2+) site. Ser62 acts as the Phosphoserine intermediate in catalysis. Substrate is bound by residues His123, 153–154 (RD), Arg185, Arg191, 260–263 (RPDR), and Lys333. Mn(2+) contacts are provided by Asp400, His404, Asp441, His442, and His460.

It belongs to the BPG-independent phosphoglycerate mutase family. In terms of assembly, monomer. Requires Mn(2+) as cofactor.

It carries out the reaction (2R)-2-phosphoglycerate = (2R)-3-phosphoglycerate. The protein operates within carbohydrate degradation; glycolysis; pyruvate from D-glyceraldehyde 3-phosphate: step 3/5. Catalyzes the interconversion of 2-phosphoglycerate and 3-phosphoglycerate. In Clostridium beijerinckii (strain ATCC 51743 / NCIMB 8052) (Clostridium acetobutylicum), this protein is 2,3-bisphosphoglycerate-independent phosphoglycerate mutase.